The primary structure comprises 308 residues: Tryptophan 2,3-dioxygenase (308 aa).

Positions 1–37 (MKPPGDNAPAGCPFSGARAAQPAHEAPHVPGDAAGET) are disordered. Substrate-binding positions include 77–81 (FIIQH), Tyr139, and Arg143. A heme-binding site is contributed by His266. Thr280 contributes to the substrate binding site.

Belongs to the tryptophan 2,3-dioxygenase family. In terms of assembly, homotetramer. Heme is required as a cofactor.

The catalysed reaction is L-tryptophan + O2 = N-formyl-L-kynurenine. The protein operates within amino-acid degradation; L-tryptophan degradation via kynurenine pathway; L-kynurenine from L-tryptophan: step 1/2. In terms of biological role, heme-dependent dioxygenase that catalyzes the oxidative cleavage of the L-tryptophan (L-Trp) pyrrole ring and converts L-tryptophan to N-formyl-L-kynurenine. Catalyzes the oxidative cleavage of the indole moiety. This is Tryptophan 2,3-dioxygenase from Burkholderia ambifaria (strain MC40-6).